Consider the following 501-residue polypeptide: Maturase K (501 aa).

This sequence belongs to the intron maturase 2 family. MatK subfamily.

Its subcellular location is the plastid. The protein localises to the chloroplast. In terms of biological role, usually encoded in the trnK tRNA gene intron. Probably assists in splicing its own and other chloroplast group II introns. This Amborella trichopoda protein is Maturase K.